Reading from the N-terminus, the 928-residue chain is Mitogen-activated protein kinase kinase kinase dlk-1 (928 aa).

Residues 1–72 form a disordered region; that stretch reads MTSTTMVTTL…GQKEGSPDPK (72 aa). A compositionally biased stretch (polar residues) spans 42 to 52; the sequence is LVTQSAPNTPI. The span at 53–69 shows a compositional bias: basic and acidic residues; sequence QHREQANAEFGQKEGSP. Positions 135–377 constitute a Protein kinase domain; that stretch reads ISELEWLGSG…FSHIRQHWEI (243 aa). Residues 141 to 149 and Lys-162 each bind ATP; that span reads LGSGSQGAV. Residue Asp-246 is the Proton acceptor of the active site. Residues 459–480 are leucine-zipper; the sequence is LQGCFTELKLKESELAEWEKDL. Disordered regions lie at residues 483 to 575, 644 to 696, and 802 to 845; these read REQW…DAIR, RRVS…PSRN, and ENAN…SMES. A compositionally biased stretch (acidic residues) spans 509–519; that stretch reads GYDDMSSDEDV. A compositionally biased stretch (low complexity) spans 530–557; sequence SNTSSSSGVQSSPFSRQSSSRSSAGQQT. Residues 605–814 are important for interaction between isoform a and isoform c; that stretch reads SAGAGSCTAI…NDVDLTSSMD (210 aa). A compositionally biased stretch (polar residues) spans 647–656; the sequence is STSVNKSTAV. Over residues 677-695 the composition is skewed to low complexity; sequence SCSSPRSSSKLNRSSYPSR. Acidic residues predominate over residues 823–833; the sequence is ADVESSEEDEG. Residues Ser-874 and Ser-878 each carry the phosphoserine modification. Residues 874-879 carry the SDGLSD hexapeptide motif; sequence SDGLSD.

Belongs to the protein kinase superfamily. STE Ser/Thr protein kinase family. MAP kinase kinase kinase subfamily. Homooligomer (via leucine zipper domain and hexapeptide motif). Isoform a (via leucine zipper domain) forms a heterooligomer with isoform c (via leucine zipper domain). Isoform c does not self-associate. It depends on Mg(2+) as a cofactor. Post-translationally, ubiquitinated by rpm-1. Negatively regulated by ubiquitination by fsn-1 bound rpm-1, followed by degradation. Phosphorylation at Ser-874 and/or at Ser-878 abolishes interaction with isoform c and promotes binding to isoform a kinase domain (likely in trans) resulting in isoform a self-association and activation. Expressed in nerve ring, nerve cord, neurons, and pharynx.

Its subcellular location is the synapse. The protein localises to the cytoplasm. It is found in the cell projection. It localises to the axon. The protein resides in the dendrite. Its subcellular location is the cilium. It catalyses the reaction L-seryl-[protein] + ATP = O-phospho-L-seryl-[protein] + ADP + H(+). The enzyme catalyses L-threonyl-[protein] + ATP = O-phospho-L-threonyl-[protein] + ADP + H(+). Its activity is regulated as follows. Inactive when associated with isoform c. Dissociation from isoform c, which is dependent on the phosphorylation of the C-terminal hexapeptide, results in self-association and activation. Transient increase in Ca(2+) levels caused by axonal injury or synaptic activity triggers the dissociation of isoform a from isoform c; the dissociation may be influenced by the phosphorylation status of the C-terminal hexapeptide. Component of a MAP kinase pathway that functions presynaptically to regulate synaptic architecture and presynaptic differentiation. Phosphorylates and activates mkk-4. Has a role in axonal regrowth following injury and synaptogenesis. Plays a role in modulating polymerization of neuronal microtubules. Also promotes tubulin post-translational modifications that protect microtubules. Plays a role in cilium length regulation, possibly by reducing rab-5 mediated endocytosis, and may also have a role in intraflagellar transport in cilia. Plays a role in the formation of muscle connections, also called muscle arm extensions, between the body wall and the motor axons in the dorsal and ventral cord. In terms of biological role, has a role in synapse and axon development, and in axonal regrowth following injury. Functionally, by forming heterooligomers with isoform a, acts as an inhibitor of isoform a activation. Its inhibitory function is independent of its catalytic activity. The chain is Mitogen-activated protein kinase kinase kinase dlk-1 (dlk-1) from Caenorhabditis elegans.